Consider the following 362-residue polypeptide: Tyrosyl-DNA phosphodiesterase 2 (362 aa).

An N-acetylmethionine modification is found at Met1. The interval Met1 to Pro20 is disordered. Glycyl lysine isopeptide (Lys-Gly) (interchain with G-Cter in SUMO2) cross-links involve residues Lys23 and Lys82. Residues Leu87–Glu109 form a disordered region. Thr88 and Thr92 each carry phosphothreonine; by ACVR1B. Residues Asp94–Glu109 show a composition bias toward polar residues. Residue Ser95 is modified to Phosphoserine. The tract at residues Asn120–Leu124 is interaction with 5' end of substrate DNA. Mg(2+)-binding residues include Asp122 and Glu152. The segment at His226 to Arg231 is interaction with 5' end of substrate DNA. Residue Asp262 is the Proton donor/acceptor of the active site. The interaction with 5' end of substrate DNA stretch occupies residues Asn264–Arg266.

It belongs to the CCR4/nocturin family. In terms of assembly, interacts with TRAF2, TRAF3, TRAF5, TRAF6, TNFRSF8/CD30, TNFRSF5/CD40, TNFRSF1B/TNF-R75, ETS1, ETS2, FLI1, SMAD3 and ACVR1B/ALK4. (Microbial infection) Interacts with Hantaan hantavirus nucleoprotein. As to quaternary structure, (Microbial infection) Interacts with Seoul hantavirus nucleoprotein. It depends on Mg(2+) as a cofactor. The cofactor is Mn(2+). In terms of processing, ubiquitinated by TRAF6. Widely expressed. Highly expressed in various brain regions, including the frontal and occipital lobes, the hippocampus, the striatum and the cerebellum.

It localises to the nucleus. It is found in the PML body. Its subcellular location is the nucleolus. The protein localises to the cytoplasm. Its function is as follows. DNA repair enzyme that can remove a variety of covalent adducts from DNA through hydrolysis of a 5'-phosphodiester bond, giving rise to DNA with a free 5' phosphate. Catalyzes the hydrolysis of dead-end complexes between DNA and the topoisomerase 2 (TOP2) active site tyrosine residue. The 5'-tyrosyl DNA phosphodiesterase activity can enable the repair of TOP2-induced DNA double-strand breaks/DSBs without the need for nuclease activity, creating a 'clean' DSB with 5'-phosphate termini that are ready for ligation. Thereby, protects the transcription of many genes involved in neurological development and maintenance from the abortive activity of TOP2. Hydrolyzes 5'-phosphoglycolates on protruding 5' ends on DSBs due to DNA damage by radiation and free radicals. Has preference for single-stranded DNA or duplex DNA with a 4 base pair overhang as substrate. Acts as a regulator of ribosome biogenesis following stress. Also has 3'-tyrosyl DNA phosphodiesterase activity, but less efficiently and much slower than TDP1. Constitutes the major if not only 5'-tyrosyl-DNA phosphodiesterase in cells. Also acts as an adapter by participating in the specific activation of MAP3K7/TAK1 in response to TGF-beta: associates with components of the TGF-beta receptor-TRAF6-TAK1 signaling module and promotes their ubiquitination dependent complex formation. Involved in non-canonical TGF-beta induced signaling routes. May also act as a negative regulator of ETS1 and may inhibit NF-kappa-B activation. Functionally, (Microbial infection) Used by picornaviruses to remove the small polypeptide, VPg (virus Protein genome-linked, the primer for viral RNA synthesis), from the genomic RNA of the virus. Acts as a 5'-tyrosyl RNA phosphodiesterase and cleaves the covalent VPg-Tyr-RNA bond. This cleavage would play a role in viral replication and occur in viral replication vesicles, but would not act on viral mRNA. The sequence is that of Tyrosyl-DNA phosphodiesterase 2 from Homo sapiens (Human).